We begin with the raw amino-acid sequence, 274 residues long: MQSLHGNCLIAYARHKYILTMVNGEYRYFNGGDLVFADASQIRVDKCVENFVFVSRDTLSLFLPMLKEEALNLHAHKKVSSLLVHHCSRDIPVFQEVAQLSQNKNLRYAEMLRKRALIFALLSVFLEDEHFIPLLLNVLQPNMRTRVCTVINNNIAHEWTLARIASELLMSPSLLKKKLREEETSYSQLLTECRMQRALQLIVIHGFSIKRVAVSCGYHSVSYFIYVFRNYYGMTPTEYQERSAQRLSNRDSAASIVAQGNFYGTDRSAEGIRL.

The HTH araC/xylS-type domain maps to 145 to 242 (TRVCTVINNN…GMTPTEYQER (98 aa)). 2 consecutive DNA-binding regions (H-T-H motif) follow at residues 162–183 (ARIA…REEE) and 209–232 (IKRV…RNYY).

In terms of assembly, homodimer.

Its function is as follows. Positively regulates the expression of about fifteen genes involved in acid resistance such as gadA, gadB and gadC. Depending on the conditions (growth phase and medium), can repress gadW. This Escherichia coli (strain K12) protein is HTH-type transcriptional regulator GadX (gadX).